The chain runs to 422 residues: CinA-like protein (422 aa).

It belongs to the CinA family.

This Mycolicibacterium vanbaalenii (strain DSM 7251 / JCM 13017 / BCRC 16820 / KCTC 9966 / NRRL B-24157 / PYR-1) (Mycobacterium vanbaalenii) protein is CinA-like protein.